Here is a 395-residue protein sequence, read N- to C-terminus: Elongation factor Tu (395 aa).

The 195-residue stretch at 10-204 folds into the tr-type G domain; that stretch reads KPHVNVGTIG…AVDEYIPEPT (195 aa). The G1 stretch occupies residues 19 to 26; that stretch reads GHVDHGKT. 19–26 provides a ligand contact to GTP; that stretch reads GHVDHGKT. Residue Thr26 participates in Mg(2+) binding. Positions 60–64 are G2; that stretch reads GITIA. Positions 81–84 are G3; that stretch reads DCPG. Residues 81 to 85 and 136 to 139 each bind GTP; these read DCPGH and NKVD. Positions 136-139 are G4; sequence NKVD. Residues 174–176 are G5; the sequence is SAL.

This sequence belongs to the TRAFAC class translation factor GTPase superfamily. Classic translation factor GTPase family. EF-Tu/EF-1A subfamily. In terms of assembly, monomer.

The protein resides in the cytoplasm. The enzyme catalyses GTP + H2O = GDP + phosphate + H(+). Functionally, GTP hydrolase that promotes the GTP-dependent binding of aminoacyl-tRNA to the A-site of ribosomes during protein biosynthesis. In Exiguobacterium sibiricum (strain DSM 17290 / CCUG 55495 / CIP 109462 / JCM 13490 / 255-15), this protein is Elongation factor Tu.